A 547-amino-acid polypeptide reads, in one-letter code: Chaperonin GroEL (547 aa).

ATP-binding positions include 30–33, Lys-51, 87–91, Gly-414, 478–480, and Asp-494; these read TLGP, DGTTT, and NAA.

Belongs to the chaperonin (HSP60) family. In terms of assembly, forms a cylinder of 14 subunits composed of two heptameric rings stacked back-to-back. Interacts with the co-chaperonin GroES.

It localises to the cytoplasm. The enzyme catalyses ATP + H2O + a folded polypeptide = ADP + phosphate + an unfolded polypeptide.. Its function is as follows. Together with its co-chaperonin GroES, plays an essential role in assisting protein folding. The GroEL-GroES system forms a nano-cage that allows encapsulation of the non-native substrate proteins and provides a physical environment optimized to promote and accelerate protein folding. This chain is Chaperonin GroEL, found in Klebsiella pneumoniae.